A 315-amino-acid chain; its full sequence is piRNA biogenesis protein EXD1 (315 aa).

A 3'-5' exonuclease domain is found at 141–228 (IYIFDIQVMQ…ECLTNYLGLQ (88 aa)).

The protein belongs to the EXD1 family. In terms of assembly, homodimer. Component of the PET complex, at least composed of EXD1, SIWI, TDRD12 and piRNAs.

The protein localises to the cytoplasm. Functionally, RNA-binding component of the PET complex, a multiprotein complex required for the processing of piRNAs during spermatogenesis. The piRNA metabolic process mediates the repression of transposable elements during meiosis by forming complexes composed of piRNAs and Piwi proteins and governs the methylation and subsequent repression of transposable elements, preventing their mobilization, which is essential for the germline integrity. The PET complex is required during the secondary piRNAs metabolic process for the PIWIL2 slicing-triggered loading of PIWIL4 piRNAs. In the PET complex, EXD1 probably acts as an RNA adapter. EXD1 is an inactive exonuclease. The sequence is that of piRNA biogenesis protein EXD1 from Bombyx mori (Silk moth).